The following is a 497-amino-acid chain: Guanosine-5'-triphosphate,3'-diphosphate pyrophosphatase (497 aa).

The protein belongs to the GppA/Ppx family. GppA subfamily.

It catalyses the reaction guanosine 3'-diphosphate 5'-triphosphate + H2O = guanosine 3',5'-bis(diphosphate) + phosphate + H(+). It functions in the pathway purine metabolism; ppGpp biosynthesis; ppGpp from GTP: step 2/2. Catalyzes the conversion of pppGpp to ppGpp. Guanosine pentaphosphate (pppGpp) is a cytoplasmic signaling molecule which together with ppGpp controls the 'stringent response', an adaptive process that allows bacteria to respond to amino acid starvation, resulting in the coordinated regulation of numerous cellular activities. The polypeptide is Guanosine-5'-triphosphate,3'-diphosphate pyrophosphatase (Vibrio campbellii (strain ATCC BAA-1116)).